The primary structure comprises 125 residues: Small ribosomal subunit protein eS8 (125 aa).

The disordered stretch occupies residues 1-34 (MQWQGRSVRKSTGGRYSPSRGKRRREIGSAPAET).

It belongs to the eukaryotic ribosomal protein eS8 family. Part of the 30S ribosomal subunit.

In Methanospirillum hungatei JF-1 (strain ATCC 27890 / DSM 864 / NBRC 100397 / JF-1), this protein is Small ribosomal subunit protein eS8.